A 185-amino-acid polypeptide reads, in one-letter code: Crossover junction endodeoxyribonuclease RuvC (185 aa).

Active-site residues include Asp7, Glu68, and Asp141. Asp7, Glu68, and Asp141 together coordinate Mg(2+).

This sequence belongs to the RuvC family. In terms of assembly, homodimer which binds Holliday junction (HJ) DNA. The HJ becomes 2-fold symmetrical on binding to RuvC with unstacked arms; it has a different conformation from HJ DNA in complex with RuvA. In the full resolvosome a probable DNA-RuvA(4)-RuvB(12)-RuvC(2) complex forms which resolves the HJ. Mg(2+) is required as a cofactor.

It is found in the cytoplasm. The enzyme catalyses Endonucleolytic cleavage at a junction such as a reciprocal single-stranded crossover between two homologous DNA duplexes (Holliday junction).. The RuvA-RuvB-RuvC complex processes Holliday junction (HJ) DNA during genetic recombination and DNA repair. Endonuclease that resolves HJ intermediates. Cleaves cruciform DNA by making single-stranded nicks across the HJ at symmetrical positions within the homologous arms, yielding a 5'-phosphate and a 3'-hydroxyl group; requires a central core of homology in the junction. The consensus cleavage sequence is 5'-(A/T)TT(C/G)-3'. Cleavage occurs on the 3'-side of the TT dinucleotide at the point of strand exchange. HJ branch migration catalyzed by RuvA-RuvB allows RuvC to scan DNA until it finds its consensus sequence, where it cleaves and resolves the cruciform DNA. The sequence is that of Crossover junction endodeoxyribonuclease RuvC from Mycobacterium sp. (strain MCS).